The chain runs to 93 residues: Small ribosomal subunit protein bS20 (93 aa).

The segment at K72–S93 is disordered. Residues T74–R84 are compositionally biased toward basic residues.

The protein belongs to the bacterial ribosomal protein bS20 family.

In terms of biological role, binds directly to 16S ribosomal RNA. This chain is Small ribosomal subunit protein bS20, found in Carboxydothermus hydrogenoformans (strain ATCC BAA-161 / DSM 6008 / Z-2901).